Consider the following 53-residue polypeptide: Ovomucoid (53 aa).

The region spanning 3–53 is the Kazal-like domain; the sequence is VDCSEYPKPGCMMERLPLCGSDNKTYNDKCNFCNAVVESNGTLTLNHFGEC. Intrachain disulfides connect Cys5/Cys35, Cys13/Cys32, and Cys21/Cys53. N-linked (GlcNAc...) asparagine glycosylation occurs at Asn42.

Its subcellular location is the secreted. This Turnix sylvaticus (Common buttonquail) protein is Ovomucoid.